We begin with the raw amino-acid sequence, 192 residues long: Molybdenum cofactor cytidylyltransferase (192 aa).

Asp101 contacts Mg(2+).

In terms of assembly, monomer. Interacts with the Moco-binding chaperone PaoD. The cofactor is Mg(2+). It depends on Mn(2+) as a cofactor.

The catalysed reaction is Mo-molybdopterin + CTP + H(+) = Mo-molybdopterin cytosine dinucleotide + diphosphate. Transfers a CMP moiety from CTP to Mo-molybdopterin (Mo-MPT) cofactor (Moco or molybdenum cofactor) to form Mo-molybdopterin cytosine dinucleotide (Mo-MCD) cofactor. Is specific for CTP; other nucleotides such as ATP and GTP cannot be utilized. Is also able to convert MPT to MCD in the absence of molybdate, however, with only one catalytic turnover. The sequence is that of Molybdenum cofactor cytidylyltransferase (mocA) from Escherichia coli (strain K12).